We begin with the raw amino-acid sequence, 427 residues long: Interferon regulatory factor 3 (427 aa).

Residue Thr3 is modified to Phosphothreonine. Positions 5 to 111 (KPRILPWLVS…DPHKIYEFVN (107 aa)) form a DNA-binding region, IRF tryptophan pentad repeat. The residue at position 14 (Ser14) is a Phosphoserine. Thr75 is subject to Phosphothreonine. The span at 91–107 (RLAEDRSKDPHDPHKIY) shows a compositional bias: basic and acidic residues. Residues 91-136 (RLAEDRSKDPHDPHKIYEFVNSGVGDFSQPDTSPDTNGGGSTSDTQ) form a disordered region. Phosphoserine occurs at positions 97 and 123. The Nuclear export signal signature appears at 139–149 (ILDELLGNMVL). A mediates interaction with ZDHHC11 region spans residues 141 to 427 (DELLGNMVLA…GMDFQGPGES (287 aa)). At Ser175 the chain carries (Microbial infection) Phosphoserine. Residue Thr180 is modified to Phosphothreonine. Residue Ser188 is modified to Phosphoserine. Residue Lys193 forms a Glycyl lysine isopeptide (Lys-Gly) (interchain with G-Cter in ISG15) linkage. The interval 200–360 (EEWEFEVTAF…SWPQDQPWTK (161 aa)) is interaction with HERC5. A phosphothreonine mark is found at Thr237, Thr244, and Thr253. The cysteines at positions 267 and 289 are disulfide-linked. Glycyl lysine isopeptide (Lys-Gly) (interchain with G-Cter in ISG15) cross-links involve residues Lys360 and Lys366. Lys366 carries the N6-acetyllysine modification. Ser385 is subject to Phosphoserine. Position 386 is a diphosphoserine (Ser386). Position 386 is a phosphoserine; by TBK1 (Ser386). Ser396 carries the post-translational modification Phosphoserine; by IKKE and TBK1. Ser398 is subject to Phosphoserine. At Thr404 the chain carries Phosphothreonine. Ser427 bears the Phosphoserine mark.

This sequence belongs to the IRF family. Monomer. Homodimer; phosphorylation-induced. Interacts (when phosphorylated) with CREBBP. Interacts with MAVS (via phosphorylated pLxIS motif). Interacts with TICAM1 (via phosphorylated pLxIS motif). Interacts with STING1 (via phosphorylated pLxIS motif). Interacts with IKBKE and TBK1. Interacts with TICAM2. Interacts with RBCK1. Interacts with HERC5. Interacts with DDX3X (phosphorylated at 'Ser-102'); the interaction allows the phosphorylation and activation of IRF3 by IKBKE. Interacts with TRIM21 and ULK1, in the presence of TRIM21; this interaction leads to IRF3 degradation by autophagy. Interacts with RIOK3; RIOK3 probably mediates the interaction of TBK1 with IRF3. Interacts with ILRUN; the interaction inhibits IRF3 binding to its DNA consensus sequence. Interacts with LYAR; this interaction impairs IRF3 DNA-binding activity. Interacts with TRAF3. Interacts with ZDHHC11; ZDHHC11 recruits IRF3 to STING1 upon DNA virus infection and thereby promotes IRF3 activation. Interacts with HSP90AA1; the interaction mediates IRF3 association with TOMM70. Interacts with BCL2; the interaction decreases upon Sendai virus infection. Interacts with BAX; the interaction is direct, increases upon Sendai virus infection and mediates the formation of the apoptosis complex TOMM70:HSP90AA1:IRF3:BAX. Interacts with DDX56. Interacts with NBR1. In terms of assembly, (Microbial infection) Interacts with rotavirus A NSP1 (via pLxIS motif); this interaction leads to the proteasome-dependent degradation of IRF3. As to quaternary structure, (Microbial infection) Interacts with herpes virus 8/HHV-8 protein VIRF1. (Microbial infection) Interacts with Seneca Valley virus protease 3C; this interaction is involved in the suppression of IRF3 expression and phosphorylation by the virus. In terms of assembly, (Microbial infection) Interacts with herpes virus 2/HHV-2 protein ICP27; this interaction inhibits IRF3 phosphorylation and nuclear translocation. As to quaternary structure, (Microbial infection) Interacts with human cytomegalovirus protein UL44; this interaction prevents IRF3 binding to its promoters. (Microbial infection) Interacts with the two fragments of MERS-COV protein N produced by CASP6 through proteolytic cleavage; both interactions inhibit IRF3 nuclear translocation after activation and IFN signaling. Constitutively phosphorylated on many Ser/Thr residues. Activated following phosphorylation by TBK1 and IKBKE. Innate adapter proteins, such as MAVS, STING1 or TICAM1, are first activated by viral RNA, cytosolic DNA, and bacterial lipopolysaccharide (LPS), respectively, leading to activation of the kinases TBK1 and IKBKE. These kinases then phosphorylate the adapter proteins on the pLxIS motif, leading to recruitment of IRF3, thereby licensing IRF3 for phosphorylation by TBK1. Phosphorylation at Ser-386 is followed by pyrophosphorylation at the same residue, promoting phosphorylation at Ser-396. Phosphorylated IRF3 dissociates from the adapter proteins, dimerizes, and then enters the nucleus to induce IFNs. Post-translationally, pyrophosphorylated by UAP1 following phosphorylation at Ser-386 by TBK1. Pyrophosphorylation promotes subsequent phosphorylation at Ser-396, leading to homodimerization of IRF3. In terms of processing, acetylation at Lys-366 by KAT8 inhibits recruimtent to promoters and transcription factor activity. Acetylation by KAT8 is promoted by phosphorylation at Ser-396. Ubiquitinated; ubiquitination involves RBCK1 leading to proteasomal degradation. Polyubiquitinated; ubiquitination involves TRIM21 leading to proteasomal degradation. Ubiquitinated by UBE3C, leading to its degradation. Deubiquitinated by USP5 on both 'Lys-48'-linked unanchored and 'Lys-63'-linked anchored polyubiquitin, leading to inhibition of anti-RNA viral innate immunity. Post-translationally, ISGylated by HERC5 resulting in sustained IRF3 activation and in the inhibition of IRF3 ubiquitination by disrupting PIN1 binding. The phosphorylation state of IRF3 does not alter ISGylation. In terms of processing, proteolytically cleaved by apoptotic caspases during apoptosis, leading to its inactivation. Cleavage by CASP3 during virus-induced apoptosis inactivates it, preventing cytokine overproduction. (Microbial infection) ISGylated. ISGylation is cleaved and removed by SARS-COV-2 nsp3 which attenuates type I interferon responses. Post-translationally, (Microbial infection) Phosphorylation and subsequent activation of IRF3 is inhibited by vaccinia virus protein E3. In terms of processing, (Microbial infection) Phosphorylated by herpes simplex virus 1/HHV-1 US3 at Ser-175 to prevent IRF3 activation. Expressed constitutively in a variety of tissues.

Its subcellular location is the cytoplasm. It localises to the nucleus. The protein localises to the mitochondrion. With respect to regulation, in the absence of viral infection, maintained as a monomer in an autoinhibited state. Phosphorylation by TBK1 and IKBKE disrupts this autoinhibition leading to the liberation of the DNA-binding and dimerization activities and its nuclear localization where it can activate type I IFN and ISG genes. Phosphorylation and activation follow the following steps: innate adapter proteins, such as MAVS, STING1 or TICAM1, are first activated by viral RNA, cytosolic DNA and bacterial lipopolysaccharide (LPS), respectively, leading to activation of the kinases TBK1 and IKBKE. These kinases then phosphorylate the adapter proteins on their pLxIS motif, leading to recruitment of IRF3, thereby licensing IRF3 for phosphorylation by TBK1. Phosphorylated IRF3 dissociates from the adapter proteins, dimerizes, and then enters the nucleus to induce IFNs. (Microbial infection) Activated upon coronavirus SARS-CoV-2 infection. Functionally, key transcriptional regulator of type I interferon (IFN)-dependent immune responses which plays a critical role in the innate immune response against DNA and RNA viruses. Regulates the transcription of type I IFN genes (IFN-alpha and IFN-beta) and IFN-stimulated genes (ISG) by binding to an interferon-stimulated response element (ISRE) in their promoters. Acts as a more potent activator of the IFN-beta (IFNB) gene than the IFN-alpha (IFNA) gene and plays a critical role in both the early and late phases of the IFNA/B gene induction. Found in an inactive form in the cytoplasm of uninfected cells and following viral infection, double-stranded RNA (dsRNA), or toll-like receptor (TLR) signaling, is phosphorylated by IKBKE and TBK1 kinases. This induces a conformational change, leading to its dimerization and nuclear localization and association with CREB binding protein (CREBBP) to form dsRNA-activated factor 1 (DRAF1), a complex which activates the transcription of the type I IFN and ISG genes. Can activate distinct gene expression programs in macrophages and can induce significant apoptosis in primary macrophages. In response to Sendai virus infection, is recruited by TOMM70:HSP90AA1 to mitochondrion and forms an apoptosis complex TOMM70:HSP90AA1:IRF3:BAX inducing apoptosis. Key transcription factor regulating the IFN response during SARS-CoV-2 infection. In Homo sapiens (Human), this protein is Interferon regulatory factor 3.